A 157-amino-acid chain; its full sequence is Small ribosomal subunit protein uS7 (157 aa).

This sequence belongs to the universal ribosomal protein uS7 family. As to quaternary structure, part of the 30S ribosomal subunit. Contacts proteins S9 and S11.

One of the primary rRNA binding proteins, it binds directly to 16S rRNA where it nucleates assembly of the head domain of the 30S subunit. Is located at the subunit interface close to the decoding center, probably blocks exit of the E-site tRNA. The polypeptide is Small ribosomal subunit protein uS7 (Roseiflexus castenholzii (strain DSM 13941 / HLO8)).